Reading from the N-terminus, the 406-residue chain is Protein IWS1 homolog 2 (406 aa).

Disordered regions lie at residues 1 to 28 (MQELDSSNDEWVKELEGENEESKFTGRR) and 41 to 89 (DEVE…SEEV). A compositionally biased stretch (basic and acidic residues) spans 10-24 (EWVKELEGENEESKF). A compositionally biased stretch (acidic residues) spans 41–56 (DEVEEDLDDFTEPADD). Residues 69 to 78 (KKDESGLEKT) show a composition bias toward basic and acidic residues. The TFIIS N-terminal domain occupies 201-284 (NLLKNWLEPL…NKWGRIIYNK (84 aa)).

It belongs to the IWS1 family.

It localises to the nucleus. In terms of biological role, transcription factor involved in RNA polymerase II (RNAPII) transcription regulation. Involved in transcription elongation. May function at post-recruitment and elongation steps of transcription. This Arabidopsis thaliana (Mouse-ear cress) protein is Protein IWS1 homolog 2.